Consider the following 452-residue polypeptide: Mannan endo-1,6-alpha-mannosidase DCW1 (452 aa).

The signal sequence occupies residues 1–18; the sequence is MKFSIYLIISLFSSFSHA. 10 N-linked (GlcNAc...) asparagine glycosylation sites follow: N25, N81, N106, N130, N200, N237, N240, N262, N271, and N286. G431 carries the GPI-anchor amidated glycine lipid modification. Residues 432–452 constitute a propeptide, removed in mature form; it reads AGIITAIIGASLVGSCVWLIL.

This sequence belongs to the glycosyl hydrolase 76 family.

Its subcellular location is the cell membrane. It carries out the reaction Random hydrolysis of (1-&gt;6)-alpha-D-mannosidic linkages in unbranched (1-&gt;6)-mannans.. Probable mannosidase required for normal synthesis of the cell wall. In Candida albicans (strain SC5314 / ATCC MYA-2876) (Yeast), this protein is Mannan endo-1,6-alpha-mannosidase DCW1 (DCW1).